The following is a 242-amino-acid chain: ATP synthase subunit a (242 aa).

6 helical membrane-spanning segments follow: residues Ser29 to Tyr49, Phe84 to Thr104, Ile114 to Val134, Phe140 to Ile160, Met181 to Leu201, and Phe203 to Gln223.

It belongs to the ATPase A chain family. In terms of assembly, F-type ATPases have 2 components, CF(1) - the catalytic core - and CF(0) - the membrane proton channel. CF(1) has five subunits: alpha(3), beta(3), gamma(1), delta(1), epsilon(1). CF(0) has three main subunits: a(1), b(2) and c(9-12). The alpha and beta chains form an alternating ring which encloses part of the gamma chain. CF(1) is attached to CF(0) by a central stalk formed by the gamma and epsilon chains, while a peripheral stalk is formed by the delta and b chains.

It localises to the cell membrane. Key component of the proton channel; it plays a direct role in the translocation of protons across the membrane. This chain is ATP synthase subunit a, found in Rickettsia africae (strain ESF-5).